The sequence spans 232 residues: CMP-N,N'-diacetyllegionaminic acid synthase (232 aa).

This sequence belongs to the CMP-NeuNAc synthase family.

The catalysed reaction is N,N-diacetyllegionaminate + CTP = CMP-N,N-diacetyllegionaminate + diphosphate. Its function is as follows. Involved in biosynthesis of legionaminic acid (5,7-diamino-3,5,7,9-tetradeoxy-D-glycero-D-galacto-non-2-ulosonic acid)(Leg), a sialic acid-like derivative that is incorporated into virulence-associated cell surface glycoconjugates such as lipopolysaccharide (LPS) which could be a key determinant in the ability of L.pneumophila to inhibit the fusion of phagosomes with lysosomes. LPS contains a majority alpha2,4-linked homomer of legionaminic acid. Catalyzes the conversion of N,N'-diacetyllegionaminic acid (Leg5Ac7Ac) and CTP into CMP-N,N'-diacetyllegionaminic acid (CMP-Leg5Ac7Ac). The sequence is that of CMP-N,N'-diacetyllegionaminic acid synthase (neuA) from Legionella pneumophila subsp. pneumophila (strain Philadelphia 1 / ATCC 33152 / DSM 7513).